A 391-amino-acid chain; its full sequence is Cytochrome b (391 aa).

4 consecutive transmembrane segments (helical) span residues 33-53 (FGSL…FLAM), 77-98 (WLIR…YLHI), 113-133 (WSAG…GYVL), and 178-198 (FFAF…VHLL). Histidine 83 and histidine 97 together coordinate heme b. The heme b site is built by histidine 182 and histidine 196. An a ubiquinone-binding site is contributed by histidine 201. Transmembrane regions (helical) follow at residues 226 to 246 (YKDL…VLFI), 288 to 308 (LGGV…PILH), 320 to 340 (LAQI…WIGG), and 347 to 367 (FIII…VFFP).

The protein belongs to the cytochrome b family. The cytochrome bc1 complex contains 3 respiratory subunits (MT-CYB, CYC1 and UQCRFS1), 2 core proteins (UQCRC1 and UQCRC2) and probably 6 low-molecular weight proteins. Heme b serves as cofactor.

The protein resides in the mitochondrion inner membrane. Its function is as follows. Component of the ubiquinol-cytochrome c reductase complex (complex III or cytochrome b-c1 complex) that is part of the mitochondrial respiratory chain. The b-c1 complex mediates electron transfer from ubiquinol to cytochrome c. Contributes to the generation of a proton gradient across the mitochondrial membrane that is then used for ATP synthesis. In Kryptolebias marmoratus (Mangrove killifish), this protein is Cytochrome b (mt-cyb).